Here is a 528-residue protein sequence, read N- to C-terminus: MSNALVPQEVSRRRTFAIISHPDAGKTTITEKVLLFGNALQRAGTVKGKKSGQHAKSDWMEMEKERGISVTTSVMQFPYSDCLVNLLDTPGHEDFSEDTYRTLTAVDSCLMVIDAAKGVEARTIKLMEVTRLRDTPIITFMNKLDRDTRDPIDLLDEVESVLNIKCAPITWPIGMGKEFKGVYHLLRDETILYSTGQGHTIQEKRVIKGLDNPELDTAIGDYAEELRDMLDLVKGASHEFNHEEFIAGELTPVFFGTAMGNFGVDHMLDGLVDWAPSPQGRETDQGKVEAKDEKFSGFVFKIQANMDPKHRDRIAFCRIVSGKYQKGMKMHQSRIGKDVRISDALTFLAGDRELLEEAYAGDIIGLHNHGSIQIGDTFTSGDKFRFAGIPNFAPELFKRIRLRDPLKQKQLLKGLIQLSEEGAVQVFRPLQNNDLIVGAVGVLQFDVVVARLKGEYNVDAMYEHINVATARWIYGKDERKVDEFRRKAEANLALDGGDNLTYIAPTMVNLSLAQERYPEIEFHQTREH.

Positions Ser11–Gln279 constitute a tr-type G domain. Residues Ser20–Thr27, Asp88–His92, and Asn142–Asp145 each bind GTP.

Belongs to the TRAFAC class translation factor GTPase superfamily. Classic translation factor GTPase family. PrfC subfamily.

It localises to the cytoplasm. Functionally, increases the formation of ribosomal termination complexes and stimulates activities of RF-1 and RF-2. It binds guanine nucleotides and has strong preference for UGA stop codons. It may interact directly with the ribosome. The stimulation of RF-1 and RF-2 is significantly reduced by GTP and GDP, but not by GMP. The polypeptide is Peptide chain release factor 3 (Pseudoalteromonas atlantica (strain T6c / ATCC BAA-1087)).